A 158-amino-acid chain; its full sequence is Endoribonuclease YbeY (158 aa).

Zn(2+) contacts are provided by histidine 124, histidine 128, and histidine 134.

This sequence belongs to the endoribonuclease YbeY family. Zn(2+) is required as a cofactor.

The protein resides in the cytoplasm. In terms of biological role, single strand-specific metallo-endoribonuclease involved in late-stage 70S ribosome quality control and in maturation of the 3' terminus of the 16S rRNA. This Latilactobacillus sakei subsp. sakei (strain 23K) (Lactobacillus sakei subsp. sakei) protein is Endoribonuclease YbeY.